The primary structure comprises 403 residues: Cysteine desulfurase IscS (403 aa).

Residues 73-74 (AT), Asn-153, Gln-181, and 201-203 (SAH) contribute to the pyridoxal 5'-phosphate site. Lys-204 is modified (N6-(pyridoxal phosphate)lysine). Thr-241 is a binding site for pyridoxal 5'-phosphate. The Cysteine persulfide intermediate role is filled by Cys-326. Position 326 (Cys-326) interacts with [2Fe-2S] cluster.

This sequence belongs to the class-V pyridoxal-phosphate-dependent aminotransferase family. NifS/IscS subfamily. Homodimer. Forms a heterotetramer with IscU, interacts with other sulfur acceptors. It depends on pyridoxal 5'-phosphate as a cofactor.

Its subcellular location is the cytoplasm. The enzyme catalyses (sulfur carrier)-H + L-cysteine = (sulfur carrier)-SH + L-alanine. It functions in the pathway cofactor biosynthesis; iron-sulfur cluster biosynthesis. Master enzyme that delivers sulfur to a number of partners involved in Fe-S cluster assembly, tRNA modification or cofactor biosynthesis. Catalyzes the removal of elemental sulfur atoms from cysteine to produce alanine. Functions as a sulfur delivery protein for Fe-S cluster synthesis onto IscU, an Fe-S scaffold assembly protein, as well as other S acceptor proteins. This Methylococcus capsulatus (strain ATCC 33009 / NCIMB 11132 / Bath) protein is Cysteine desulfurase IscS.